We begin with the raw amino-acid sequence, 507 residues long: RNA-splicing ligase RtcB homolog (507 aa).

Mn(2+) contacts are provided by aspartate 121, cysteine 124, histidine 229, histidine 261, and histidine 355. 228-232 (NHYGE) serves as a coordination point for GMP. Residues 355 to 356 (HN), 404 to 407 (GGTM), serine 411, 430 to 433 (HGSG), and lysine 506 each bind GMP. The active-site GMP-histidine intermediate is the histidine 430.

The protein belongs to the RtcB family. As to quaternary structure, catalytic component of the tRNA-splicing ligase complex. Requires Mn(2+) as cofactor.

It carries out the reaction a 3'-end 3'-phospho-ribonucleotide-RNA + a 5'-end dephospho-ribonucleoside-RNA + GTP = a ribonucleotidyl-ribonucleotide-RNA + GMP + diphosphate. The catalysed reaction is a 3'-end 2',3'-cyclophospho-ribonucleotide-RNA + a 5'-end dephospho-ribonucleoside-RNA + GTP + H2O = a ribonucleotidyl-ribonucleotide-RNA + GMP + diphosphate + H(+). Its function is as follows. Catalytic subunit of the tRNA-splicing ligase complex that acts by directly joining spliced tRNA halves to mature-sized tRNAs by incorporating the precursor-derived splice junction phosphate into the mature tRNA as a canonical 3',5'-phosphodiester. May act as an RNA ligase with broad substrate specificity, and may function toward other RNAs. The polypeptide is RNA-splicing ligase RtcB homolog (Theileria parva (East coast fever infection agent)).